The following is a 429-amino-acid chain: Adenylosuccinate synthetase (429 aa).

Residues 12 to 18 (GDEGKGK) and 40 to 42 (GHT) each bind GTP. The Proton acceptor role is filled by aspartate 13. Residues aspartate 13 and glycine 40 each contribute to the Mg(2+) site. Residues 13–16 (DEGK), 38–41 (NAGH), threonine 128, arginine 142, glutamine 223, threonine 238, and arginine 302 contribute to the IMP site. Histidine 41 (proton donor) is an active-site residue. 298–304 (VNTGRPR) contributes to the substrate binding site. GTP is bound by residues arginine 304, 330–332 (KLD), and 412–414 (GVG).

It belongs to the adenylosuccinate synthetase family. Homodimer. Mg(2+) is required as a cofactor.

The protein localises to the cytoplasm. The catalysed reaction is IMP + L-aspartate + GTP = N(6)-(1,2-dicarboxyethyl)-AMP + GDP + phosphate + 2 H(+). It participates in purine metabolism; AMP biosynthesis via de novo pathway; AMP from IMP: step 1/2. Functionally, plays an important role in the de novo pathway of purine nucleotide biosynthesis. Catalyzes the first committed step in the biosynthesis of AMP from IMP. The protein is Adenylosuccinate synthetase of Kocuria rhizophila (strain ATCC 9341 / DSM 348 / NBRC 103217 / DC2201).